A 244-amino-acid chain; its full sequence is L-xylulose reductase (244 aa).

At methionine 1 the chain carries N-acetylmethionine. 11–40 (LVTGAGKGIGRGTVQALHATGARVVAVSRT) provides a ligand contact to NADP(+). Position 21 is an omega-N-methylarginine (arginine 21). The residue at position 46 (serine 46) is a Phosphoserine. Substrate is bound at residue serine 136. The active-site Proton acceptor is the tyrosine 149. Residue lysine 153 participates in NADP(+) binding.

This sequence belongs to the short-chain dehydrogenases/reductases (SDR) family. In terms of assembly, homotetramer. Highly expressed in kidney, liver and epididymis. In the epididymis, it is mainly expressed in the proximal and distal sections of the corpus region. Weakly or not expressed in brain, lung, heart, spleen and testis.

The protein localises to the membrane. The enzyme catalyses xylitol + NADP(+) = L-xylulose + NADPH + H(+). Functionally, catalyzes the NADPH-dependent reduction of several pentoses, tetroses, trioses, alpha-dicarbonyl compounds and L-xylulose. Participates in the uronate cycle of glucose metabolism. May play a role in the water absorption and cellular osmoregulation in the proximal renal tubules by producing xylitol, an osmolyte, thereby preventing osmolytic stress from occurring in the renal tubules. This Homo sapiens (Human) protein is L-xylulose reductase (DCXR).